The following is a 391-amino-acid chain: S-adenosylmethionine synthase (391 aa).

H14 contacts ATP. D16 is a binding site for Mg(2+). A K(+)-binding site is contributed by E42. L-methionine contacts are provided by E55 and Q98. A flexible loop region spans residues 98–108 (QSVDIAIGVDE). ATP is bound by residues 172 to 174 (DGK), 238 to 239 (RF), D247, 253 to 254 (RK), A270, and K274. D247 provides a ligand contact to L-methionine. Residue K278 coordinates L-methionine.

Belongs to the AdoMet synthase family. Homotetramer; dimer of dimers. Mg(2+) is required as a cofactor. K(+) serves as cofactor.

Its subcellular location is the cytoplasm. It catalyses the reaction L-methionine + ATP + H2O = S-adenosyl-L-methionine + phosphate + diphosphate. Its pathway is amino-acid biosynthesis; S-adenosyl-L-methionine biosynthesis; S-adenosyl-L-methionine from L-methionine: step 1/1. Catalyzes the formation of S-adenosylmethionine (AdoMet) from methionine and ATP. The overall synthetic reaction is composed of two sequential steps, AdoMet formation and the subsequent tripolyphosphate hydrolysis which occurs prior to release of AdoMet from the enzyme. This is S-adenosylmethionine synthase from Clostridium botulinum (strain Okra / Type B1).